A 520-amino-acid polypeptide reads, in one-letter code: DnaJ homolog l(2)tid, mitochondrial (520 aa).

The N-terminal 62 residues, Met-1–Leu-62, are a transit peptide targeting the mitochondrion. Arg-30 is modified (omega-N-methylarginine). Positions Asp-65–Gly-130 constitute a J domain. At Lys-106 the chain carries N6-acetyllysine. The segment at Gly-214–Arg-292 adopts a CR-type zinc-finger fold. Zn(2+) contacts are provided by Cys-227, Cys-230, Cys-244, Cys-247, Cys-266, Cys-269, Cys-280, and Cys-283. A CXXCXGXG motif; approximate repeat occupies Cys-227 to Lys-234. Residues Cys-244 to Gly-251 form a CXXCXGXG motif repeat. The stretch at Cys-266 to Arg-273 is one CXXCXGXG motif; approximate repeat. Residues Cys-280 to Gly-287 form a CXXCXGXG motif repeat. The interval Gln-430 to Asn-520 is disordered. A compositionally biased stretch (low complexity) spans Ala-446–Ala-476. Residues Ser-479 to Glu-495 are compositionally biased toward basic and acidic residues. Over residues Gly-496–Phe-511 the composition is skewed to gly residues.

As to quaternary structure, interacts with ptc (via C-terminal cytoplasmic region); the interaction is probably direct. Interacts with hh/hedgehog; the interaction is probably mediated by the hedgehog receptor ptc. Post-translationally, appears to produce proteins of differing size. Predicted to have a molecular mass of 56 kDa (TID56) however proteins of 50 kDa, 47 kDa and 40 kDa have been identified and named TID50, TID47 and TID40. TID50 and TID40 localize to the mitochondria while TID47 localizes to the cytoplasm. TID50 is probably TID56 that has undergone mitochondrial transit peptide processing. TID40 and TID47 may be alternately processed proteins or may be isoforms resulting from alternative splicing. Ubiquitously expressed throughout embryonic development. In larvae, expression is seen in sensory organs, gopplet cells, gonads, imaginal disks, proventriculus, fat body, hematopoietic organ, midgut, Malpighian tubules and ring gland.

It is found in the cytoplasm. It localises to the cytosol. Its subcellular location is the mitochondrion. The protein resides in the mitochondrion outer membrane. Its function is as follows. Involved in hh/hedgehog signaling. May act as a tumor suppressor in larval imaginal disks. The protein is DnaJ homolog l(2)tid, mitochondrial of Drosophila melanogaster (Fruit fly).